The following is a 485-amino-acid chain: UDP-N-acetylmuramoyl-L-alanyl-D-glutamate--2,6-diaminopimelate ligase (485 aa).

Position 28 (Ser28) interacts with UDP-N-acetyl-alpha-D-muramoyl-L-alanyl-D-glutamate. 108-114 is a binding site for ATP; sequence GTNGKTS. Residues Asn147, 148–149, Ser175, and Arg183 each bind UDP-N-acetyl-alpha-D-muramoyl-L-alanyl-D-glutamate; that span reads TT. Lys215 carries the N6-carboxylysine modification. Meso-2,6-diaminopimelate contacts are provided by residues Arg374, 398–401, Gly449, and Glu453; that span reads DNPR. Positions 398 to 401 match the Meso-diaminopimelate recognition motif motif; it reads DNPR.

The protein belongs to the MurCDEF family. MurE subfamily. It depends on Mg(2+) as a cofactor. In terms of processing, carboxylation is probably crucial for Mg(2+) binding and, consequently, for the gamma-phosphate positioning of ATP.

The protein resides in the cytoplasm. It catalyses the reaction UDP-N-acetyl-alpha-D-muramoyl-L-alanyl-D-glutamate + meso-2,6-diaminopimelate + ATP = UDP-N-acetyl-alpha-D-muramoyl-L-alanyl-gamma-D-glutamyl-meso-2,6-diaminopimelate + ADP + phosphate + H(+). Its pathway is cell wall biogenesis; peptidoglycan biosynthesis. Functionally, catalyzes the addition of meso-diaminopimelic acid to the nucleotide precursor UDP-N-acetylmuramoyl-L-alanyl-D-glutamate (UMAG) in the biosynthesis of bacterial cell-wall peptidoglycan. This is UDP-N-acetylmuramoyl-L-alanyl-D-glutamate--2,6-diaminopimelate ligase from Fusobacterium nucleatum subsp. nucleatum (strain ATCC 25586 / DSM 15643 / BCRC 10681 / CIP 101130 / JCM 8532 / KCTC 2640 / LMG 13131 / VPI 4355).